The chain runs to 408 residues: Putative FBD-associated F-box protein At5g50270 (408 aa).

An F-box domain is found at M1 to L54. The FBD domain occupies P345–I408.

This chain is Putative FBD-associated F-box protein At5g50270, found in Arabidopsis thaliana (Mouse-ear cress).